The following is a 181-amino-acid chain: Probable pyruvoyl-dependent arginine decarboxylase (181 aa).

Pyruvic acid (Ser) is present on serine 43.

It belongs to the PdaD family. It depends on pyruvate as a cofactor.

The enzyme catalyses L-arginine + H(+) = agmatine + CO2. The sequence is that of Probable pyruvoyl-dependent arginine decarboxylase from Chlorobium phaeobacteroides (strain BS1).